Here is a 49-residue protein sequence, read N- to C-terminus: MKKKVTLACKNCGSRNYTTMKSSAALAERLEVKKYCNNCNSHTVHLETK.

Belongs to the bacterial ribosomal protein bL33 family.

The chain is Large ribosomal subunit protein bL33B (rpmGB) from Bacillus licheniformis.